A 290-amino-acid polypeptide reads, in one-letter code: RIO-type serine/threonine-protein kinase Rio1 (290 aa).

Residues 1–22 are disordered; that stretch reads MTDEFGMVEPQEGEAFGDEWEE. Residues 11–22 show a composition bias toward acidic residues; sequence QEGEAFGDEWEE. In terms of domain architecture, Protein kinase spans 79 to 290; that stretch reads DAFGGPISTG…DEGEDGDGDE (212 aa). ATP contacts are provided by residues 85–93, lysine 107, glutamate 175, and valine 177; that span reads ISTGKEANV. Aspartate 218 acts as the Proton acceptor in catalysis. 2 residues coordinate Mg(2+): asparagine 223 and aspartate 235. The 4-aspartylphosphate intermediate role is filled by aspartate 235.

It belongs to the protein kinase superfamily. RIO-type Ser/Thr kinase family. The cofactor is Mg(2+). Requires Mn(2+) as cofactor. Autophosphorylated.

It carries out the reaction L-seryl-[protein] + ATP = O-phospho-L-seryl-[protein] + ADP + H(+). The enzyme catalyses L-threonyl-[protein] + ATP = O-phospho-L-threonyl-[protein] + ADP + H(+). It catalyses the reaction ATP + H2O = ADP + phosphate + H(+). Its function is as follows. Serine/threonine-protein kinase that is able to autophosphorylate as well as to phosphorylate proteasome subunit alpha 1 (PsmA1) in vitro. Despite the protein kinase domain is proposed to act predominantly as an ATPase. In Haloferax volcanii (strain ATCC 29605 / DSM 3757 / JCM 8879 / NBRC 14742 / NCIMB 2012 / VKM B-1768 / DS2) (Halobacterium volcanii), this protein is RIO-type serine/threonine-protein kinase Rio1 (rio1).